The sequence spans 84 residues: U2-theraphotoxin-Cg1b 1 (84 aa).

The first 21 residues, 1–21, serve as a signal peptide directing secretion; it reads MKVSVLITLAVWGVMFLLTSA. Positions 22 to 48 are excised as a propeptide; sequence QERGSDQMDSPAWLKSMERIFQSEERE. Disulfide bonds link C49–C63, C56–C68, and C62–C76.

It belongs to the neurotoxin 10 (Hwtx-1) family. 06 (F4b) subfamily. As to expression, expressed by the venom gland.

The protein localises to the secreted. Its function is as follows. Probable ion channel inhibitor. The chain is U2-theraphotoxin-Cg1b 1 from Chilobrachys guangxiensis (Chinese earth tiger tarantula).